The primary structure comprises 131 residues: UPF0251 protein MMP0619 (131 aa).

It belongs to the UPF0251 family.

This Methanococcus maripaludis (strain DSM 14266 / JCM 13030 / NBRC 101832 / S2 / LL) protein is UPF0251 protein MMP0619.